We begin with the raw amino-acid sequence, 176 residues long: ATP-dependent protease subunit HslV (176 aa).

Residue threonine 2 is part of the active site. The Na(+) site is built by glycine 158, cysteine 161, and threonine 164.

This sequence belongs to the peptidase T1B family. HslV subfamily. In terms of assembly, a double ring-shaped homohexamer of HslV is capped on each side by a ring-shaped HslU homohexamer. The assembly of the HslU/HslV complex is dependent on binding of ATP.

It is found in the cytoplasm. The enzyme catalyses ATP-dependent cleavage of peptide bonds with broad specificity.. With respect to regulation, allosterically activated by HslU binding. Its function is as follows. Protease subunit of a proteasome-like degradation complex believed to be a general protein degrading machinery. The chain is ATP-dependent protease subunit HslV from Pasteurella multocida (strain Pm70).